Here is a 140-residue protein sequence, read N- to C-terminus: Endoribonuclease YbeY (140 aa).

Zn(2+) contacts are provided by histidine 105, histidine 109, and aspartate 115.

This sequence belongs to the endoribonuclease YbeY family. The cofactor is Zn(2+).

It is found in the cytoplasm. Single strand-specific metallo-endoribonuclease involved in late-stage 70S ribosome quality control and in maturation of the 3' terminus of the 16S rRNA. This Flavobacterium psychrophilum (strain ATCC 49511 / DSM 21280 / CIP 103535 / JIP02/86) protein is Endoribonuclease YbeY.